Here is a 621-residue protein sequence, read N- to C-terminus: DDB1- and CUL4-associated factor 10 homolog (621 aa).

4 WD repeats span residues 46-85 (GRTGAIFNLEFNADGNVVVAATERKCVLVFDAITQKEIFK), 89-127 (AHTDSVNCIKFFDERLFATGSDDFTVALWDLRNMKQKLR), 131-170 (GHSNWVKNIEYSSKDKLLVSSGFDGSIFTWDINSQTEQGL), and 176-215 (FHASGLMRCRISPTGDKLVLCTSGGYIMIIHHLDLTTLHK). Disordered regions lie at residues 305–349 (VRSE…PRQA) and 437–483 (LMGS…TTVR). Phosphoserine is present on Ser307. Positions 324–342 (STTLASRSSLNESQDQDTV) are enriched in polar residues. Positions 454-478 (ESNQSSSSSSSSSSSSSSSSSSNNS) are enriched in low complexity. 2 positions are modified to phosphoserine: Ser494 and Ser497. The WD 5 repeat unit spans residues 588–621 (EHQDVVLCAKFSPREPLLVTGCNGGEVTWYRPNL).

It belongs to the WD repeat DCAF10 family.

The polypeptide is DDB1- and CUL4-associated factor 10 homolog (Drosophila melanogaster (Fruit fly)).